The sequence spans 419 residues: L-rhamnose isomerase (419 aa).

Mn(2+)-binding residues include histidine 262, aspartate 294, and aspartate 296.

The protein belongs to the rhamnose isomerase family. In terms of assembly, homotetramer. Mn(2+) serves as cofactor.

It localises to the cytoplasm. The catalysed reaction is L-rhamnopyranose = L-rhamnulose. It participates in carbohydrate degradation; L-rhamnose degradation; glycerone phosphate from L-rhamnose: step 1/3. Catalyzes the interconversion of L-rhamnose and L-rhamnulose. This Escherichia coli O45:K1 (strain S88 / ExPEC) protein is L-rhamnose isomerase.